The primary structure comprises 380 residues: Protein-tyrosine sulfotransferase A (380 aa).

The Cytoplasmic portion of the chain corresponds to 1 to 6; the sequence is MRKNRE. The helical; Signal-anchor for type II membrane protein transmembrane segment at 7–27 threads the bilayer; it reads LLLVLFLVVFILFYFITARTA. At 28 to 380 the chain is on the lumenal side; that stretch reads DDPYYSNHRE…PIVDNEVSKL (353 aa). An N-linked (GlcNAc...) asparagine glycan is attached at Asn66. 79 to 83 lines the 3'-phosphoadenylyl sulfate pocket; it reads RSGTT. A disulfide bridge connects residues Cys97 and Cys157. Glu100 serves as the catalytic Proton donor/acceptor. Residues 102–106 form an interaction with peptide substrate region; sequence RVIPR. 3'-phosphoadenylyl sulfate-binding residues include Arg184, Ser192, and Arg196. Cys226 and Cys234 are joined by a disulfide. 3'-phosphoadenylyl sulfate-binding positions include Tyr239, 284-293, and Lys299; that span reads SSDQVVKPVN.

Belongs to the protein sulfotransferase family.

It is found in the golgi apparatus membrane. The enzyme catalyses L-tyrosyl-[protein] + 3'-phosphoadenylyl sulfate = O-sulfo-L-tyrosine-[protein] + adenosine 3',5'-bisphosphate + H(+). Its function is as follows. Catalyzes the O-sulfation of tyrosine residues within acidic motifs of polypeptides, using 3'-phosphoadenylyl sulfate (PAPS) as cosubstrate. The polypeptide is Protein-tyrosine sulfotransferase A (tpst-1) (Caenorhabditis elegans).